Consider the following 479-residue polypeptide: Phosphoglycerate kinase, glycosomal (479 aa).

Residues Val-23, Asp-24, Phe-25, Asn-26, Arg-39, Ser-61, His-62, Gly-64, Arg-65, Arg-132, His-168, and Arg-169 each coordinate (2R)-3-phosphoglycerate. The ADP site is built by Gly-214 and Ala-215. Gly-214 contacts CDP. 2 residues coordinate AMP: Ala-215 and Lys-216. Residue Ala-215 coordinates ATP. Ala-215 provides a ligand contact to Mg(2+). Residue Lys-216 participates in (2R)-3-phosphoglycerate binding. Asp-219 lines the CDP pocket. Residue Asp-219 participates in Mg(2+) binding. Positions 220 and 238 each coordinate ADP. An AMP-binding site is contributed by Lys-220. Lys-220 is an ATP binding site. Gly-238 serves as a coordination point for CDP. AMP contacts are provided by Ala-239 and Ala-311. Positions 239 and 311 each coordinate ATP. Ala-311 and Asn-335 together coordinate ADP. Gly-336 and Phe-341 together coordinate CDP. Residues Phe-341, Glu-342, Asp-374, and Ser-375 each coordinate ADP. Residue Glu-342 coordinates AMP. Glu-342, Asp-374, and Ser-375 together coordinate ATP. A Mg(2+)-binding site is contributed by Asp-374.

It belongs to the phosphoglycerate kinase family. As to quaternary structure, monomer. The cofactor is Mg(2+).

It is found in the glycosome. It catalyses the reaction (2R)-3-phosphoglycerate + ATP = (2R)-3-phospho-glyceroyl phosphate + ADP. It functions in the pathway carbohydrate degradation; glycolysis; pyruvate from D-glyceraldehyde 3-phosphate: step 2/5. The sequence is that of Phosphoglycerate kinase, glycosomal (PGKC) from Leishmania major.